We begin with the raw amino-acid sequence, 345 residues long: Protein RecA (345 aa).

65–72 contacts ATP; it reads GPESSGKT.

The protein belongs to the RecA family.

Its subcellular location is the cytoplasm. Can catalyze the hydrolysis of ATP in the presence of single-stranded DNA, the ATP-dependent uptake of single-stranded DNA by duplex DNA, and the ATP-dependent hybridization of homologous single-stranded DNAs. It interacts with LexA causing its activation and leading to its autocatalytic cleavage. The polypeptide is Protein RecA (Stenotrophomonas maltophilia (strain R551-3)).